A 202-amino-acid polypeptide reads, in one-letter code: Adenylyl-sulfate kinase (202 aa).

ATP is bound at residue 31 to 38; it reads GLSASGKS. Ser-105 functions as the Phosphoserine intermediate in the catalytic mechanism.

It belongs to the APS kinase family.

It catalyses the reaction adenosine 5'-phosphosulfate + ATP = 3'-phosphoadenylyl sulfate + ADP + H(+). The protein operates within sulfur metabolism; hydrogen sulfide biosynthesis; sulfite from sulfate: step 2/3. Catalyzes the synthesis of activated sulfate. This is Adenylyl-sulfate kinase (MET14) from Saccharomyces pastorianus (Lager yeast).